The chain runs to 441 residues: Serum response factor-binding protein 1 (441 aa).

Coiled coils occupy residues 52–77 (KGTEDALLKNQRRAQRLLEEIHAMKE) and 118–140 (LLKKKIDVLKDAVQAFKDARQSA). Disordered stretches follow at residues 137–342 (RQSA…RNDK), 357–389 (FHSLAGPKSSRRDPREQAPKNKAPDFPENEPPV), and 406–441 (QTMQAPLHPSWEASRRRKEQQSKIAVFQGKKITFDD). The segment covering 139-152 (SAPAAESSESTSGE) has biased composition (low complexity). A compositionally biased stretch (basic and acidic residues) spans 153–183 (GRCKDIARSKDDARESQHPERTVVREQKAKD). Residue Lys-201 forms a Glycyl lysine isopeptide (Lys-Gly) (interchain with G-Cter in SUMO2) linkage. At Ser-214 the chain carries Phosphoserine. Positions 237 to 246 (DSNQGKASTK) are enriched in polar residues. The span at 269–282 (EKEYFDDSTEERFY) shows a compositional bias: basic and acidic residues. Ser-276, Ser-291, and Ser-293 each carry phosphoserine. Residues 308–321 (KESGVHSSAKELKP) are compositionally biased toward basic and acidic residues. Residue Lys-328 forms a Glycyl lysine isopeptide (Lys-Gly) (interchain with G-Cter in SUMO2) linkage. Over residues 366 to 381 (SRRDPREQAPKNKAPD) the composition is skewed to basic and acidic residues.

As to quaternary structure, interacts with SRF. Forms complexes with SRF and SRF cofactors ARID2, MYOCD and NKX2-5. Interacts with the N-terminus of SLC2A4. In terms of tissue distribution, highly expressed in heart, skeletal muscle, liver, kidney, testis and brain. Also expressed in white adipose tissue. Expression is up-regulated in cardiomyopathic heart.

It is found in the cytoplasm. It localises to the perinuclear region. Functionally, may be involved in regulating transcriptional activation of cardiac genes during the aging process. May play a role in biosynthesis and/or processing of SLC2A4 in adipose cells. The sequence is that of Serum response factor-binding protein 1 from Mus musculus (Mouse).